We begin with the raw amino-acid sequence, 245 residues long: Fumarate reductase iron-sulfur subunit (245 aa).

Residues 17–98 (PQSAVNKPHF…NGVITLMPMP (82 aa)) enclose the 2Fe-2S ferredoxin-type domain. Residues cysteine 60, cysteine 65, cysteine 68, and cysteine 80 each coordinate [2Fe-2S] cluster. Residues 145–174 (AQEVFELDRCIECGCCIASCGTKLMRPNFI) form the 4Fe-4S ferredoxin-type domain. [4Fe-4S] cluster is bound by residues cysteine 154, cysteine 157, and cysteine 160. [3Fe-4S] cluster-binding residues include cysteine 164, cysteine 211, and cysteine 217. Cysteine 221 is a [4Fe-4S] cluster binding site.

This sequence belongs to the succinate dehydrogenase/fumarate reductase iron-sulfur protein family. Part of an enzyme complex containing three subunits: a flavoprotein (frdA), an iron-sulfur protein (frdB), and diheme cytochrome b (frdC). It depends on [2Fe-2S] cluster as a cofactor. The cofactor is [3Fe-4S] cluster. Requires [4Fe-4S] cluster as cofactor.

It catalyses the reaction a menaquinone + succinate = a menaquinol + fumarate. In Helicobacter pylori (strain J99 / ATCC 700824) (Campylobacter pylori J99), this protein is Fumarate reductase iron-sulfur subunit (frdB).